Here is a 391-residue protein sequence, read N- to C-terminus: NADH-quinone oxidoreductase subunit D (391 aa).

It belongs to the complex I 49 kDa subunit family. As to quaternary structure, NDH-1 is composed of 14 different subunits. Subunits NuoB, C, D, E, F, and G constitute the peripheral sector of the complex.

The protein localises to the cell inner membrane. It catalyses the reaction a quinone + NADH + 5 H(+)(in) = a quinol + NAD(+) + 4 H(+)(out). NDH-1 shuttles electrons from NADH, via FMN and iron-sulfur (Fe-S) centers, to quinones in the respiratory chain. The immediate electron acceptor for the enzyme in this species is believed to be ubiquinone. Couples the redox reaction to proton translocation (for every two electrons transferred, four hydrogen ions are translocated across the cytoplasmic membrane), and thus conserves the redox energy in a proton gradient. The chain is NADH-quinone oxidoreductase subunit D from Rickettsia bellii (strain OSU 85-389).